The primary structure comprises 345 residues: Sulfate/thiosulfate import ATP-binding protein CysA (345 aa).

An ABC transporter domain is found at 3–237 (IQVSGLCKHF…PRTEFVYQFV (235 aa)). 35-42 (GPSGCGKT) is a binding site for ATP.

Belongs to the ABC transporter superfamily. Sulfate/tungstate importer (TC 3.A.1.6) family. As to quaternary structure, the complex is composed of two ATP-binding proteins (CysA), two transmembrane proteins (CysT and CysW) and a solute-binding protein (CysP).

It localises to the cell inner membrane. It catalyses the reaction sulfate(out) + ATP + H2O = sulfate(in) + ADP + phosphate + H(+). The catalysed reaction is thiosulfate(out) + ATP + H2O = thiosulfate(in) + ADP + phosphate + H(+). Part of the ABC transporter complex CysAWTP involved in sulfate/thiosulfate import. Responsible for energy coupling to the transport system. The sequence is that of Sulfate/thiosulfate import ATP-binding protein CysA from Vibrio vulnificus (strain CMCP6).